A 381-amino-acid polypeptide reads, in one-letter code: 4-hydroxy-3-methylbut-2-en-1-yl diphosphate synthase (flavodoxin) (381 aa).

[4Fe-4S] cluster is bound by residues Cys-273, Cys-276, Cys-308, and Glu-315.

This sequence belongs to the IspG family. It depends on [4Fe-4S] cluster as a cofactor.

It carries out the reaction (2E)-4-hydroxy-3-methylbut-2-enyl diphosphate + oxidized [flavodoxin] + H2O + 2 H(+) = 2-C-methyl-D-erythritol 2,4-cyclic diphosphate + reduced [flavodoxin]. Its pathway is isoprenoid biosynthesis; isopentenyl diphosphate biosynthesis via DXP pathway; isopentenyl diphosphate from 1-deoxy-D-xylulose 5-phosphate: step 5/6. In terms of biological role, converts 2C-methyl-D-erythritol 2,4-cyclodiphosphate (ME-2,4cPP) into 1-hydroxy-2-methyl-2-(E)-butenyl 4-diphosphate. This is 4-hydroxy-3-methylbut-2-en-1-yl diphosphate synthase (flavodoxin) from Gluconobacter oxydans (strain 621H) (Gluconobacter suboxydans).